Reading from the N-terminus, the 328-residue chain is MTSTKQHKKVILVGDGAVGSSYAFALVNQGIAQELGIIEIPQLHEKAVGDALDLSHALAFTSPKKIYAAKYEDCADADLVVITAGAPQKPGETRLDLVGKNLAINKSIVTQVVASGFDGIFLVAANPVDVLTYSTWKFSGFPKERVIGSGTSLDSARFRQALAEKLDVDARSVHAYIMGEHGDSEFAVWSHANIAGVNLEEFLKDTQNVQEAELIELFEGVRDAAYTIINKKGATYYGIAVALARITKAILDDENAVLPLSVFQEGQYGVKNVFIGQPAVVGAHGIVRPVNIPLNDAETQKMQASAKELQAIIDEAWKNPEFQAASKN.

Residues V18, E39, K46, Y71, and 85-86 each bind NAD(+); that span reads GA. Q88 and R94 together coordinate substrate. Residues S107, 124–126, and S149 contribute to the NAD(+) site; that span reads AAN. Position 126–129 (126–129) interacts with substrate; that stretch reads NPVD. Residue 154-157 coordinates substrate; the sequence is DSAR. 2 residues coordinate beta-D-fructose 1,6-bisphosphate: R159 and H174. Catalysis depends on H181, which acts as the Proton acceptor. At Y226 the chain carries Phosphotyrosine. T235 lines the substrate pocket.

This sequence belongs to the LDH/MDH superfamily. LDH family. As to quaternary structure, homotetramer.

It localises to the cytoplasm. It carries out the reaction (S)-lactate + NAD(+) = pyruvate + NADH + H(+). Its pathway is fermentation; pyruvate fermentation to lactate; (S)-lactate from pyruvate: step 1/1. Allosterically activated by fructose 1,6-bisphosphate (FBP). Its function is as follows. Catalyzes the conversion of lactate to pyruvate. The chain is L-lactate dehydrogenase from Streptococcus gordonii (strain Challis / ATCC 35105 / BCRC 15272 / CH1 / DL1 / V288).